A 338-amino-acid polypeptide reads, in one-letter code: tRNA-specific 2-thiouridylase MnmA (338 aa).

ATP-binding positions include 6 to 13 (LMSGGIDS) and Met-32. The active-site Nucleophile is the Cys-87. Cys-87 and Cys-185 are joined by a disulfide. Gly-111 is a binding site for ATP. Residues 135–137 (KDQ) are interaction with tRNA. Cys-185 serves as the catalytic Cysteine persulfide intermediate. The interaction with tRNA stretch occupies residues 288 to 289 (RY).

This sequence belongs to the MnmA/TRMU family.

It localises to the cytoplasm. The enzyme catalyses S-sulfanyl-L-cysteinyl-[protein] + uridine(34) in tRNA + AH2 + ATP = 2-thiouridine(34) in tRNA + L-cysteinyl-[protein] + A + AMP + diphosphate + H(+). In terms of biological role, catalyzes the 2-thiolation of uridine at the wobble position (U34) of tRNA, leading to the formation of s(2)U34. The chain is tRNA-specific 2-thiouridylase MnmA from Syntrophomonas wolfei subsp. wolfei (strain DSM 2245B / Goettingen).